Consider the following 522-residue polypeptide: Sensory neuron membrane protein 1 (522 aa).

The Cytoplasmic segment spans residues 1–11 (MKLPKHLKFAA). A helical membrane pass occupies residues 12–32 (GAGGAFLFGILFGWVMFPAIL). Over 33–455 (KGQLKKEMAL…KFQLFYPKKA (423 aa)) the chain is Extracellular. 2 N-linked (GlcNAc...) asparagine glycosylation sites follow: N67 and N229. Intrachain disulfides connect C268–C333, C297–C350, and C335–C339. N-linked (GlcNAc...) asparagine glycosylation occurs at N438. A helical membrane pass occupies residues 456–476 (VGVIKWLLVTFGGFGLIGCTI). Residues 477–522 (YHYKDRIMSFASSPGSAAVTKVKPEEVEQKDVSVIGQPQEPAKINM) are Cytoplasmic-facing.

It belongs to the CD36 family.

Its subcellular location is the cell membrane. Plays an olfactory role that is not restricted to pheromone sensitivity. The chain is Sensory neuron membrane protein 1 from Plutella xylostella (Diamondback moth).